A 427-amino-acid polypeptide reads, in one-letter code: 3-phosphoshikimate 1-carboxyvinyltransferase (427 aa).

Residues lysine 21, serine 22, and arginine 26 each contribute to the 3-phosphoshikimate site. Residue lysine 21 coordinates phosphoenolpyruvate. Phosphoenolpyruvate contacts are provided by glycine 93 and arginine 121. Residues serine 166, glutamine 168, aspartate 314, and lysine 341 each contribute to the 3-phosphoshikimate site. Residue glutamine 168 participates in phosphoenolpyruvate binding. The Proton acceptor role is filled by aspartate 314. Positions 345 and 387 each coordinate phosphoenolpyruvate.

Belongs to the EPSP synthase family. Monomer.

The protein localises to the cytoplasm. It carries out the reaction 3-phosphoshikimate + phosphoenolpyruvate = 5-O-(1-carboxyvinyl)-3-phosphoshikimate + phosphate. The protein operates within metabolic intermediate biosynthesis; chorismate biosynthesis; chorismate from D-erythrose 4-phosphate and phosphoenolpyruvate: step 6/7. In terms of biological role, catalyzes the transfer of the enolpyruvyl moiety of phosphoenolpyruvate (PEP) to the 5-hydroxyl of shikimate-3-phosphate (S3P) to produce enolpyruvyl shikimate-3-phosphate and inorganic phosphate. This chain is 3-phosphoshikimate 1-carboxyvinyltransferase, found in Alkaliphilus oremlandii (strain OhILAs) (Clostridium oremlandii (strain OhILAs)).